We begin with the raw amino-acid sequence, 423 residues long: MKEIISRHKAGEQIGICSVCSAHPLVIESALRFDLNSGNKVLIEATSNQVNQFGGYTGMKPADFRDFVYGIAQEVGFPRERLILGGDHLGPNCWQNEPAAAAMEKSVELIKAYVAAGFSKIHLDASMSCADDPTPLDPMVVARRAAVLCKAAEETANEEQKCHLTYVIGTEVPVPGGEASTIGSVHVTREVDAARTLETHQIAFRESGLEEALSRVIAIVVQPGVEFDHTQIIHYQPQAAQALSAWIKETPMVYEAHSTDYQTRQAYRALVRDHYAILKVGPALTFALREAIFALAQMENELISPEQRSRVLEVIDEVMLNEPGYWKKYYRPTWSQAMVDIHFSLSDRIRYYWPHPRIRQSVEKLIANLNNVTLPLGLISQFMPVQFERLSEGVLTPTPHNLIIDKIQDVLRAYRFGCTPDVA.

This sequence belongs to the GatZ/KbaZ family. GatZ subfamily. Forms a complex with GatY.

It functions in the pathway carbohydrate metabolism; D-tagatose 6-phosphate degradation; D-glyceraldehyde 3-phosphate and glycerone phosphate from D-tagatose 6-phosphate: step 2/2. In terms of biological role, component of the tagatose-1,6-bisphosphate aldolase GatYZ that is required for full activity and stability of the Y subunit. Could have a chaperone-like function for the proper and stable folding of GatY. When expressed alone, GatZ does not show any aldolase activity. Is involved in the catabolism of galactitol. The polypeptide is D-tagatose-1,6-bisphosphate aldolase subunit GatZ (Salmonella heidelberg (strain SL476)).